Reading from the N-terminus, the 307-residue chain is Serine/threonine-protein phosphatase PP2A-3 catalytic subunit (307 aa).

Positions 55, 57, 83, and 115 each coordinate Mn(2+). The active-site Proton donor is H116. Positions 165 and 239 each coordinate Mn(2+).

It belongs to the PPP phosphatase family. PP-2A subfamily. Mn(2+) serves as cofactor.

It localises to the cytoplasm. It carries out the reaction O-phospho-L-seryl-[protein] + H2O = L-seryl-[protein] + phosphate. The catalysed reaction is O-phospho-L-threonyl-[protein] + H2O = L-threonyl-[protein] + phosphate. In Oryza sativa subsp. indica (Rice), this protein is Serine/threonine-protein phosphatase PP2A-3 catalytic subunit (PP2A3).